A 1273-amino-acid chain; its full sequence is Probable methionine synthase (1273 aa).

One can recognise a Hcy-binding domain in the interval 7 to 327; that stretch reads FKELADIAKE…DHINAMYKAV (321 aa). Zn(2+) is bound by residues cysteine 249, cysteine 312, and cysteine 313. The region spanning 360 to 621 is the Pterin-binding domain; it reads FVNIGERCNV…IDKPLLQLLE (262 aa). The B12-binding N-terminal domain maps to 652 to 749; sequence KTDEWRNTSV…FMDAERQANI (98 aa). Methylcob(III)alamin is bound by residues glutamate 699, 772–776, histidine 775, serine 820, threonine 824, and alanine 876; that span reads GDVHD. Positions 762-897 constitute a B12-binding domain; that stretch reads QGTVVIATVK…DMTVRDAFLQ (136 aa). An AdoMet activation domain is found at 927–1273; sequence SLKDRRFVAL…LSPIIGYELD (347 aa). S-adenosyl-L-methionine contacts are provided by residues aspartate 977, arginine 1171, and 1225–1226; that span reads YF.

This sequence belongs to the vitamin-B12 dependent methionine synthase family. It depends on methylcob(III)alamin as a cofactor. Zn(2+) is required as a cofactor.

It carries out the reaction (6S)-5-methyl-5,6,7,8-tetrahydrofolate + L-homocysteine = (6S)-5,6,7,8-tetrahydrofolate + L-methionine. Its pathway is amino-acid biosynthesis; L-methionine biosynthesis via de novo pathway; L-methionine from L-homocysteine (MetH route): step 1/1. In terms of biological role, catalyzes the transfer of a methyl group from methyl-cobalamin to homocysteine, yielding enzyme-bound cob(I)alamin and methionine. Subsequently, remethylates the cofactor using methyltetrahydrofolate. In Caenorhabditis briggsae, this protein is Probable methionine synthase (metr-1).